We begin with the raw amino-acid sequence, 399 residues long: Elongation factor Tu (399 aa).

The region spanning 10–209 is the tr-type G domain; the sequence is NPHVNIGTIG…EVDSYIPTPE (200 aa). Residues 19-26 are G1; it reads GHVYHGKT. Residue 19–26 coordinates GTP; it reads GHVYHGKT. Position 26 (threonine 26) interacts with Mg(2+). Positions 60 to 64 are G2; the sequence is GITIA. The tract at residues 81 to 84 is G3; that stretch reads DCPG. Residues 81 to 85 and 136 to 139 each bind GTP; these read DCPGH and NKQD. The tract at residues 136 to 139 is G4; it reads NKQD. A G5 region spans residues 174–176; the sequence is SAL.

The protein belongs to the TRAFAC class translation factor GTPase superfamily. Classic translation factor GTPase family. EF-Tu/EF-1A subfamily. In terms of assembly, monomer.

It is found in the cytoplasm. It catalyses the reaction GTP + H2O = GDP + phosphate + H(+). GTP hydrolase that promotes the GTP-dependent binding of aminoacyl-tRNA to the A-site of ribosomes during protein biosynthesis. In Helicobacter pylori (strain J99 / ATCC 700824) (Campylobacter pylori J99), this protein is Elongation factor Tu.